The primary structure comprises 119 residues: Ig heavy chain V region X44 (119 aa).

The 117-residue stretch at 1 to 117 (EVKLLESGGG…WGQGTLVTVS (117 aa)) folds into the Ig-like domain.

This Mus musculus (Mouse) protein is Ig heavy chain V region X44.